The following is a 478-amino-acid chain: UDP-N-acetylmuramate--L-alanine ligase (478 aa).

ATP is bound at residue 125–131 (GTHGKTT).

Belongs to the MurCDEF family.

The protein localises to the cytoplasm. The enzyme catalyses UDP-N-acetyl-alpha-D-muramate + L-alanine + ATP = UDP-N-acetyl-alpha-D-muramoyl-L-alanine + ADP + phosphate + H(+). Its pathway is cell wall biogenesis; peptidoglycan biosynthesis. Cell wall formation. The sequence is that of UDP-N-acetylmuramate--L-alanine ligase from Dichelobacter nodosus (strain VCS1703A).